The sequence spans 560 residues: Dihydroxy-acid dehydratase (560 aa).

Aspartate 78 serves as a coordination point for Mg(2+). [2Fe-2S] cluster is bound at residue cysteine 119. Mg(2+)-binding residues include aspartate 120 and lysine 121. Lysine 121 is subject to N6-carboxylysine. Cysteine 192 contributes to the [2Fe-2S] cluster binding site. Glutamate 446 lines the Mg(2+) pocket. Serine 472 (proton acceptor) is an active-site residue.

This sequence belongs to the IlvD/Edd family. Homodimer. [2Fe-2S] cluster is required as a cofactor. It depends on Mg(2+) as a cofactor.

The catalysed reaction is (2R)-2,3-dihydroxy-3-methylbutanoate = 3-methyl-2-oxobutanoate + H2O. It catalyses the reaction (2R,3R)-2,3-dihydroxy-3-methylpentanoate = (S)-3-methyl-2-oxopentanoate + H2O. It functions in the pathway amino-acid biosynthesis; L-isoleucine biosynthesis; L-isoleucine from 2-oxobutanoate: step 3/4. It participates in amino-acid biosynthesis; L-valine biosynthesis; L-valine from pyruvate: step 3/4. Functions in the biosynthesis of branched-chain amino acids. Catalyzes the dehydration of (2R,3R)-2,3-dihydroxy-3-methylpentanoate (2,3-dihydroxy-3-methylvalerate) into 2-oxo-3-methylpentanoate (2-oxo-3-methylvalerate) and of (2R)-2,3-dihydroxy-3-methylbutanoate (2,3-dihydroxyisovalerate) into 2-oxo-3-methylbutanoate (2-oxoisovalerate), the penultimate precursor to L-isoleucine and L-valine, respectively. The protein is Dihydroxy-acid dehydratase of Anaeromyxobacter dehalogenans (strain 2CP-C).